The chain runs to 131 residues: Small ribosomal subunit protein uS9 (131 aa).

Belongs to the universal ribosomal protein uS9 family.

This Mycoplasmopsis synoviae (strain 53) (Mycoplasma synoviae) protein is Small ribosomal subunit protein uS9.